A 292-amino-acid polypeptide reads, in one-letter code: ATP synthase subunit a (292 aa).

The next 7 membrane-spanning stretches (helical) occupy residues 39–59 (QILG…FYKL), 73–93 (FLLL…DLLG), 102–122 (YFLM…LGGI), 128–148 (SLTF…VMGI), 172–192 (TFIP…SISL), 196–216 (GNIL…IFIF), and 231–251 (VFAG…AGVL).

Belongs to the ATPase A chain family. F-type ATPases have 2 components, CF(1) - the catalytic core - and CF(0) - the membrane proton channel. CF(1) has five subunits: alpha(3), beta(3), gamma(1), delta(1), epsilon(1). CF(0) has three main subunits: a(1), b(2) and c(9-12). The alpha and beta chains form an alternating ring which encloses part of the gamma chain. CF(1) is attached to CF(0) by a central stalk formed by the gamma and epsilon chains, while a peripheral stalk is formed by the delta and b chains.

Its subcellular location is the cell membrane. In terms of biological role, key component of the proton channel; it plays a direct role in the translocation of protons across the membrane. In Mycoplasma genitalium (strain ATCC 33530 / DSM 19775 / NCTC 10195 / G37) (Mycoplasmoides genitalium), this protein is ATP synthase subunit a.